The chain runs to 382 residues: ATP phosphoribosyltransferase regulatory subunit (382 aa).

It belongs to the class-II aminoacyl-tRNA synthetase family. HisZ subfamily. As to quaternary structure, heteromultimer composed of HisG and HisZ subunits.

The protein resides in the cytoplasm. Its pathway is amino-acid biosynthesis; L-histidine biosynthesis; L-histidine from 5-phospho-alpha-D-ribose 1-diphosphate: step 1/9. Its function is as follows. Required for the first step of histidine biosynthesis. May allow the feedback regulation of ATP phosphoribosyltransferase activity by histidine. The polypeptide is ATP phosphoribosyltransferase regulatory subunit (Burkholderia cenocepacia (strain HI2424)).